The sequence spans 87 residues: Small ribosomal subunit protein bS20 (87 aa).

This sequence belongs to the bacterial ribosomal protein bS20 family.

Binds directly to 16S ribosomal RNA. The polypeptide is Small ribosomal subunit protein bS20 (Finegoldia magna (strain ATCC 29328 / DSM 20472 / WAL 2508) (Peptostreptococcus magnus)).